The sequence spans 132 residues: Cytidine deaminase (132 aa).

One can recognise a CMP/dCMP-type deaminase domain in the interval 1–128 (MDRQMLIKEA…ELLPGAFTAE (128 aa)). Substrate is bound at residue 42–44 (NIE). Cys53 contributes to the Zn(2+) binding site. Residue Glu55 is the Proton donor of the active site. 2 residues coordinate Zn(2+): Cys86 and Cys89.

It belongs to the cytidine and deoxycytidylate deaminase family. Zn(2+) is required as a cofactor.

The enzyme catalyses cytidine + H2O + H(+) = uridine + NH4(+). The catalysed reaction is 2'-deoxycytidine + H2O + H(+) = 2'-deoxyuridine + NH4(+). Its function is as follows. This enzyme scavenges exogenous and endogenous cytidine and 2'-deoxycytidine for UMP synthesis. In Halalkalibacterium halodurans (strain ATCC BAA-125 / DSM 18197 / FERM 7344 / JCM 9153 / C-125) (Bacillus halodurans), this protein is Cytidine deaminase (cdd).